Reading from the N-terminus, the 404-residue chain is Glycerol-1-phosphate dehydrogenase [NAD(P)+] (404 aa).

NAD(+)-binding positions include Asp-55, 117-121 (GTVHD), and 139-142 (TAPS). Residue Asp-144 coordinates substrate. An NAD(+)-binding site is contributed by Ser-148. Residue Asp-191 participates in substrate binding. 2 residues coordinate Ni(2+): Asp-191 and His-271. His-275 lines the substrate pocket. A Ni(2+)-binding site is contributed by His-291.

It belongs to the glycerol-1-phosphate dehydrogenase family. Homodimer. Ni(2+) is required as a cofactor.

Its subcellular location is the cytoplasm. The catalysed reaction is sn-glycerol 1-phosphate + NAD(+) = dihydroxyacetone phosphate + NADH + H(+). It catalyses the reaction sn-glycerol 1-phosphate + NADP(+) = dihydroxyacetone phosphate + NADPH + H(+). Its function is as follows. Catalyzes the NAD(P)H-dependent reduction of dihydroxyacetonephosphate (DHAP or glycerone phosphate) to glycerol 1-phosphate (G1P). The G1P thus generated is probably used for the synthesis of phosphoglycerolipids in Gram-positive bacterial species. This Geobacillus thermodenitrificans (strain NG80-2) protein is Glycerol-1-phosphate dehydrogenase [NAD(P)+].